The following is a 151-amino-acid chain: Ribosome maturation factor RimP (151 aa).

It belongs to the RimP family.

It is found in the cytoplasm. Its function is as follows. Required for maturation of 30S ribosomal subunits. This chain is Ribosome maturation factor RimP, found in Shewanella sediminis (strain HAW-EB3).